The chain runs to 80 residues: ATP synthase subunit c (80 aa).

2 helical membrane-spanning segments follow: residues 11 to 31 and 53 to 73; these read MAAA…IGIL and FFVV…LGLY.

It belongs to the ATPase C chain family. F-type ATPases have 2 components, F(1) - the catalytic core - and F(0) - the membrane proton channel. F(1) has five subunits: alpha(3), beta(3), gamma(1), delta(1), epsilon(1). F(0) has three main subunits: a(1), b(2) and c(10-14). The alpha and beta chains form an alternating ring which encloses part of the gamma chain. F(1) is attached to F(0) by a central stalk formed by the gamma and epsilon chains, while a peripheral stalk is formed by the delta and b chains.

It is found in the cell inner membrane. In terms of biological role, f(1)F(0) ATP synthase produces ATP from ADP in the presence of a proton or sodium gradient. F-type ATPases consist of two structural domains, F(1) containing the extramembraneous catalytic core and F(0) containing the membrane proton channel, linked together by a central stalk and a peripheral stalk. During catalysis, ATP synthesis in the catalytic domain of F(1) is coupled via a rotary mechanism of the central stalk subunits to proton translocation. Its function is as follows. Key component of the F(0) channel; it plays a direct role in translocation across the membrane. A homomeric c-ring of between 10-14 subunits forms the central stalk rotor element with the F(1) delta and epsilon subunits. The polypeptide is ATP synthase subunit c (Erwinia tasmaniensis (strain DSM 17950 / CFBP 7177 / CIP 109463 / NCPPB 4357 / Et1/99)).